A 328-amino-acid polypeptide reads, in one-letter code: tRNA dimethylallyltransferase (328 aa).

10-17 (GPTASGKT) lines the ATP pocket. 12–17 (TASGKT) contributes to the substrate binding site.

This sequence belongs to the IPP transferase family. Monomer. Requires Mg(2+) as cofactor.

The catalysed reaction is adenosine(37) in tRNA + dimethylallyl diphosphate = N(6)-dimethylallyladenosine(37) in tRNA + diphosphate. Functionally, catalyzes the transfer of a dimethylallyl group onto the adenine at position 37 in tRNAs that read codons beginning with uridine, leading to the formation of N6-(dimethylallyl)adenosine (i(6)A). This chain is tRNA dimethylallyltransferase, found in Bifidobacterium longum subsp. infantis (strain ATCC 15697 / DSM 20088 / JCM 1222 / NCTC 11817 / S12).